A 129-amino-acid polypeptide reads, in one-letter code: D-ribose pyranase (129 aa).

The active-site Proton donor is H20. Substrate contacts are provided by residues D28, H96, and 118–120 (YAN).

Belongs to the RbsD / FucU family. RbsD subfamily. As to quaternary structure, homodecamer.

It is found in the cytoplasm. It catalyses the reaction beta-D-ribopyranose = beta-D-ribofuranose. It functions in the pathway carbohydrate metabolism; D-ribose degradation; D-ribose 5-phosphate from beta-D-ribopyranose: step 1/2. In terms of biological role, catalyzes the interconversion of beta-pyran and beta-furan forms of D-ribose. The chain is D-ribose pyranase from Staphylococcus saprophyticus subsp. saprophyticus (strain ATCC 15305 / DSM 20229 / NCIMB 8711 / NCTC 7292 / S-41).